Consider the following 512-residue polypeptide: Cytochrome P450 monooxygenase gliC (512 aa).

Positions 1–19 are cleaved as a signal peptide; that stretch reads MAFTLTILVPCMVLALVAA. Asn118, Asn421, and Asn434 each carry an N-linked (GlcNAc...) asparagine glycan. Cys452 contacts heme.

Belongs to the cytochrome P450 family. Heme is required as a cofactor.

Its pathway is mycotoxin biosynthesis. In terms of biological role, cytochrome P450 monooxygenase; part of the gene cluster that mediates the biosynthesis of gliotoxin, a member of the epipolythiodioxopiperazine (ETP) class of toxins characterized by a disulfide bridged cyclic dipeptide. The first step in gliotoxin biosynthesis is the condensation of serine and phenylalanine to form the cyclo-L-phenylalanyl-L-serine diketopiperazine (DKP) by the NRPS gliP. GliP is also able to produce the DKP cyclo-L-tryptophanyl-L-serine, suggesting that the substrate specificity of the first adenylation (A) domain in gliP is sufficiently relaxed to accommodate both L-Phe and L-Trp. The cytochrome P450 monooxygenase gliC has been shown to catalyze the subsequent hydroxylation of the alpha-carbon of L-Phe in cyclo-L-phenylalanyl-L-serine whereas the second cytochrome P450 enzyme, gliF, is presumably involved in the modification of the DKP side chain. The glutathione S-transferase (GST) gliG then forms a bis-glutathionylated biosynthetic intermediate which is responsible for the sulfurization of gliotoxin. This bis-glutathionylated intermediate is subsequently processed by the gamma-glutamyl cyclotransferase gliK to remove both gamma-glutamyl moieties. Subsequent processing via gliI yields a biosynthetic intermediate, which is N-methylated via the N-methyltransferase gliN, before the gliotoxin oxidoreductase gliT-mediated disulfide bridge closure. GliN-mediated amide methylation confers stability to ETP, damping the spontaneous formation of tri- and tetrasulfides. Intracellular dithiol gliotoxin oxidized by gliT is subsequently effluxed by gliA. Gliotoxin contributes to pathogenesis during invasive aspergillosis. In macrophages and neutrophils, gliotoxin showed inhibition of various different cell functions including cytokine production, antigen presentation, phagocytosis, and production of reactive oxygen species. This is Cytochrome P450 monooxygenase gliC from Aspergillus fumigatus (strain ATCC MYA-4609 / CBS 101355 / FGSC A1100 / Af293) (Neosartorya fumigata).